A 404-amino-acid polypeptide reads, in one-letter code: Putative nitronate monooxygenase (404 aa).

FMN is bound at residue 41–43 (PMA). The Proton acceptor role is filled by His224. His224 lines the substrate pocket. FMN contacts are provided by residues 270 to 272 (AGG) and 293 to 294 (GT).

The protein belongs to the nitronate monooxygenase family. NMO class I subfamily. FMN is required as a cofactor.

It is found in the cytoplasm. The catalysed reaction is ethylnitronate + O2 = chemical entity + acetaldehyde + nitrite + H(+). Its function is as follows. Catalyzes the oxidation of alkyl nitronates to produce the corresponding carbonyl compounds and nitrites. This is Putative nitronate monooxygenase from Saccharomyces cerevisiae (strain ATCC 204508 / S288c) (Baker's yeast).